Consider the following 990-residue polypeptide: F-box/LRR-repeat protein 15 (990 aa).

The region spanning 190–236 (FEVHIDLTDDLLHMVFSFLNHVDLCRSAMVCRQWRVASAHEDFWRVL) is the F-box domain. LRR repeat units follow at residues 237 to 258 (NFENIRISMEQFENMCSRYPNA), 280 to 303 (LRNLEVLTIGKGHISESFFQALGE), 317 to 341 (LGNGAQEIHLSHDRLRELKITKCRV), 348 to 373 (CPQLRSLSLKRSNMSQAMLNCPLLQL), 397 to 423 (LESLDVSNCSCVSDETLREIAQACANL), 441 to 465 (LPMLTVLKLHSCEGITSASMTWIAN), 466 to 477 (SPALEVLELDNC), 478 to 503 (NLLTTVSLHLSRLQSISLVHCRKFTD), 519 to 542 (CPALRRITITSNALRRLALQKQEN), 550 to 574 (CHSLQEVDLSDCESLSNSVCKIFSD), 589 to 612 (CESLTAVRFCNSSLASLSLVGCRA), 614 to 633 (TSLELKCPRIEQICLDGCDH), 640 to 652 (QPVALRSLNLGIC), 653 to 678 (PKLSVLNIEAPYMVSLELKGCGVLSE), 734 to 756 (LPNLTVLDLSYTFLMNLEPVFKS), 758 to 782 (IQLKVLKLQACKYLTDSSLEPLYKE), 785 to 809 (LPALEELDLSYGTLCQTAIDDLLAC), 813 to 839 (LTHLSLNGCVNMHDLDWGSTSVHLFDY), 882 to 893 (FYHLSTLNLSLS), 894 to 914 (VNLKEVDLTCSNLVLLNLSNC), 915 to 937 (CSLEVLKLGCPRLASLFLQSCNM), and 949 to 973 (CSSLETLDLRFCPKISSVSMSKFRT).

The chain is F-box/LRR-repeat protein 15 (FBL15) from Arabidopsis thaliana (Mouse-ear cress).